Here is a 742-residue protein sequence, read N- to C-terminus: Ferric enterobactin receptor PirA (742 aa).

The N-terminal stretch at 1 to 28 (MYPQFRRGHLAAAVLFASSSLLGGQALA) is a signal peptide. Residues 57–184 (QELKQAPGVS…AGGVVNIITK (128 aa)) form the TBDR plug domain. Disordered regions lie at residues 91 to 112 (GVNLTGNSSSGQRGNNRQIDIR) and 409 to 435 (SSLKQGFVGSDSLPGTPAAGSRSPKSK). Positions 94-108 (LTGNSSSGQRGNNRQ) are enriched in polar residues. Positions 189 to 742 (RLRGSMTVFT…AYYVSMTTSF (554 aa)) constitute a TBDR beta-barrel domain. A disulfide bridge links Cys-516 with Cys-525. Positions 725–742 (ATYNEPGRAYYVSMTTSF) match the TonB C-terminal box motif.

This sequence belongs to the TonB-dependent receptor family.

It localises to the cell outer membrane. Specific receptor for the siderophore ferric enterobactin. Probably involved in the transport of siderophores, including host catecholamines such as L-DOPA. The protein is Ferric enterobactin receptor PirA of Pseudomonas aeruginosa (strain ATCC 15692 / DSM 22644 / CIP 104116 / JCM 14847 / LMG 12228 / 1C / PRS 101 / PAO1).